Here is a 347-residue protein sequence, read N- to C-terminus: Bifunctional methylenetetrahydrofolate dehydrogenase/cyclohydrolase 2, mitochondrial (347 aa).

Residues 98 to 102 (YVRNK) and 145 to 147 (VQL) contribute to the substrate site. NAD(+) contacts are provided by residues 214–216 (GRS) and Arg247. Position 323-327 (323-327 (PGGVG)) interacts with substrate.

Belongs to the tetrahydrofolate dehydrogenase/cyclohydrolase family. The cofactor is Mg(2+). Isoform 1, isoform 4 and isoform 5 are expressed in brain and placenta.

The protein localises to the mitochondrion inner membrane. It catalyses the reaction (6R)-5,10-methylene-5,6,7,8-tetrahydrofolate + NAD(+) = (6R)-5,10-methenyltetrahydrofolate + NADH. It carries out the reaction (6R)-5,10-methenyltetrahydrofolate + H2O = (6R)-10-formyltetrahydrofolate + H(+). The enzyme catalyses (6R)-5,10-methylene-5,6,7,8-tetrahydrofolate + NADP(+) = (6R)-5,10-methenyltetrahydrofolate + NADPH. Its pathway is one-carbon metabolism; tetrahydrofolate interconversion. Its function is as follows. Bifunctional mitochondrial folate-interconverting enzyme that has both NAD/NADP-dependent methylenetetrahydrofolate dehydrogenase and methenyltetrahydrofolate cyclohydrolase activities. In Homo sapiens (Human), this protein is Bifunctional methylenetetrahydrofolate dehydrogenase/cyclohydrolase 2, mitochondrial.